The following is a 1563-amino-acid chain: Pentafunctional AROM polypeptide (1563 aa).

Residues 1-382 (MAESSSNPTR…YEPKASVVED (382 aa)) are 3-dehydroquinate synthase. NAD(+)-binding positions include 48-50 (DTN), 82-85 (EYSK), 113-115 (GGV), and Asp118. Arg129 provides a ligand contact to 7-phospho-2-dehydro-3-deoxy-D-arabino-heptonate. 138-139 (TT) is an NAD(+) binding site. 7-phospho-2-dehydro-3-deoxy-D-arabino-heptonate contacts are provided by Asp145 and Lys151. An NAD(+)-binding site is contributed by Lys160. Asn161 provides a ligand contact to 7-phospho-2-dehydro-3-deoxy-D-arabino-heptonate. NAD(+)-binding positions include 178 to 181 (FLNT) and Asn189. Zn(2+) is bound at residue Glu193. 7-phospho-2-dehydro-3-deoxy-D-arabino-heptonate-binding positions include 193 to 196 (EVIK) and Lys248. The active-site Proton acceptor; for 3-dehydroquinate synthase activity is Glu258. Residues 262–266 (RNLLN) and His269 each bind 7-phospho-2-dehydro-3-deoxy-D-arabino-heptonate. Position 269 (His269) interacts with Zn(2+). His273 (proton acceptor; for 3-dehydroquinate synthase activity) is an active-site residue. 7-phospho-2-dehydro-3-deoxy-D-arabino-heptonate-binding residues include His285 and Lys354. Position 285 (His285) interacts with Zn(2+). The interval 395 to 834 (VHAGVPKDLK…WDTMSNYFKS (440 aa)) is EPSP synthase. The active-site For EPSP synthase activity is Cys816. Over residues 836 to 850 (LEGEEEPHSSHVSHE) the composition is skewed to basic and acidic residues. The tract at residues 836 to 857 (LEGEEEPHSSHVSHEKPRKGNP) is disordered. A shikimate kinase region spans residues 857-1051 (PKSIFIIGMR…KKKPQSSFVS (195 aa)). 864-871 (GMRGAGKS) is an ATP binding site. Residues 1052 to 1265 (LTVPNVSKAL…AAPGQLSAAE (214 aa)) form a 3-dehydroquinase region. The active-site Proton acceptor; for 3-dehydroquinate dehydratase activity is His1168. The active-site Schiff-base intermediate with substrate; for 3-dehydroquinate dehydratase activity is Lys1196. The segment at 1278 to 1563 (PRSFYLFGKP…TDAQAAVMGN (286 aa)) is shikimate dehydrogenase.

The protein in the N-terminal section; belongs to the sugar phosphate cyclases superfamily. Dehydroquinate synthase family. In the 2nd section; belongs to the EPSP synthase family. It in the 3rd section; belongs to the shikimate kinase family. This sequence in the 4th section; belongs to the type-I 3-dehydroquinase family. The protein in the C-terminal section; belongs to the shikimate dehydrogenase family. As to quaternary structure, homodimer. Zn(2+) serves as cofactor.

It localises to the cytoplasm. The enzyme catalyses 7-phospho-2-dehydro-3-deoxy-D-arabino-heptonate = 3-dehydroquinate + phosphate. The catalysed reaction is 3-dehydroquinate = 3-dehydroshikimate + H2O. It carries out the reaction shikimate + NADP(+) = 3-dehydroshikimate + NADPH + H(+). It catalyses the reaction shikimate + ATP = 3-phosphoshikimate + ADP + H(+). The enzyme catalyses 3-phosphoshikimate + phosphoenolpyruvate = 5-O-(1-carboxyvinyl)-3-phosphoshikimate + phosphate. The protein operates within metabolic intermediate biosynthesis; chorismate biosynthesis; chorismate from D-erythrose 4-phosphate and phosphoenolpyruvate: step 2/7. Its pathway is metabolic intermediate biosynthesis; chorismate biosynthesis; chorismate from D-erythrose 4-phosphate and phosphoenolpyruvate: step 3/7. It participates in metabolic intermediate biosynthesis; chorismate biosynthesis; chorismate from D-erythrose 4-phosphate and phosphoenolpyruvate: step 4/7. It functions in the pathway metabolic intermediate biosynthesis; chorismate biosynthesis; chorismate from D-erythrose 4-phosphate and phosphoenolpyruvate: step 5/7. The protein operates within metabolic intermediate biosynthesis; chorismate biosynthesis; chorismate from D-erythrose 4-phosphate and phosphoenolpyruvate: step 6/7. Functionally, the AROM polypeptide catalyzes 5 consecutive enzymatic reactions in prechorismate polyaromatic amino acid biosynthesis. In Sordaria macrospora (strain ATCC MYA-333 / DSM 997 / K(L3346) / K-hell), this protein is Pentafunctional AROM polypeptide.